A 426-amino-acid chain; its full sequence is Glutamate-1-semialdehyde 2,1-aminomutase (426 aa).

Residue Lys-265 is modified to N6-(pyridoxal phosphate)lysine.

It belongs to the class-III pyridoxal-phosphate-dependent aminotransferase family. HemL subfamily. In terms of assembly, homodimer. It depends on pyridoxal 5'-phosphate as a cofactor.

It localises to the cytoplasm. The catalysed reaction is (S)-4-amino-5-oxopentanoate = 5-aminolevulinate. It participates in porphyrin-containing compound metabolism; protoporphyrin-IX biosynthesis; 5-aminolevulinate from L-glutamyl-tRNA(Glu): step 2/2. The polypeptide is Glutamate-1-semialdehyde 2,1-aminomutase (Actinobacillus pleuropneumoniae serotype 3 (strain JL03)).